Consider the following 670-residue polypeptide: MSDGPIAPPKPAVVAEAHEVDTFHVPKAFFDKHPSGPHLKNLDEYKKLYEESIRSPDVFWARKARELLTFDKDFQTTRIGSLENGDVAWFPEGRLNASFNCVDRHAIKNPNKVAIIYEADEPNEGRTITYGELLREVSRVAWVLKQRGVKKGDTVAIYLPMIPEAIIAFLACSRIGAVHSVVFAGFSSDSLRDRVLDAGSKVVITTDEGKRGGKVIGTKRIVDEGLKQCPDVSTVLVYKRTGAEVPWTEGRDIWWHEEVEKYPAYIAPDSVNSEDPLFLLYTSGSTGKPKGVMHTTAGYLLGAAMTGKYVFDIHDDDRYFCGGDVGWITGHTYVVYAPLLLGCSTVVFESTPAYPDFSRYWDVIEKHKVTQFYVAPTALRLLKRAGDHHIHHKMEHLRVLGSVGEPIAAEVWKWYFEKVGKEEAHICDTYWQTETGSNVITPLAGVTPTKPGSASLPFFGIEPAIIDPVSGEEISGNDVEGVLAFKQPWPSMARTVWGAHKRYMDTYLNVYKGYYFTGDGAGRDHEGYYWIRGRVDDVVNVSGHRLSTAEIEAALIEHPMVAEAAVVGIADELTGQAVNAFVSLKEGNETNDQVRKDLILQVRKSIGPFAAPKAVFVVDDLPKTRSGKIMRRILRKILSGEEDSLGDISTLSDPSVVERIIATVHASRGK.

CoA is bound by residues 211 to 214 (RGGK) and Thr329. ATP contacts are provided by residues 404–406 (GEP), 428–433 (DTYWQT), Asp519, and Arg534. Ser542 is a binding site for CoA. Arg545 is an ATP binding site. Arg603 contacts CoA.

Belongs to the ATP-dependent AMP-binding enzyme family.

It carries out the reaction acetate + ATP + CoA = acetyl-CoA + AMP + diphosphate. The protein is Acetyl-coenzyme A synthetase (facA) of Emericella nidulans (strain FGSC A4 / ATCC 38163 / CBS 112.46 / NRRL 194 / M139) (Aspergillus nidulans).